A 142-amino-acid chain; its full sequence is Large ribosomal subunit protein uL13 (142 aa).

It belongs to the universal ribosomal protein uL13 family. As to quaternary structure, part of the 50S ribosomal subunit.

In terms of biological role, this protein is one of the early assembly proteins of the 50S ribosomal subunit, although it is not seen to bind rRNA by itself. It is important during the early stages of 50S assembly. In Cronobacter sakazakii (strain ATCC BAA-894) (Enterobacter sakazakii), this protein is Large ribosomal subunit protein uL13.